We begin with the raw amino-acid sequence, 288 residues long: MRIRVPATTANLGPGFDSCGLALTLYLTLDIGAEADSWYIEHNIGGGIPHDETNVIIETALNLAPNLTPHHLVMTCDIPPARGLGSSSAAVVAGIELANTLAELNLSKEEKVRIAAEIEGHPDNVAPAVLGNWVVGAKLDGEDFYVRHLFPDCALIAFIPKAELLTSESRGVLPDTLPFKEAVQASSIANVMIAAILRNDMALAGEMMERDLWHEKYRSQLVPHLTQIRDVAKSQGAYAACLSGAGPTVLVFAPRNLANTLQTSLQTLEIDADVLLLDVEGSGAEVFR.

Residue 79–89 coordinates ATP; sequence PPARGLGSSSA.

Belongs to the GHMP kinase family. Homoserine kinase subfamily.

It localises to the cytoplasm. It carries out the reaction L-homoserine + ATP = O-phospho-L-homoserine + ADP + H(+). Its pathway is amino-acid biosynthesis; L-threonine biosynthesis; L-threonine from L-aspartate: step 4/5. In terms of biological role, catalyzes the ATP-dependent phosphorylation of L-homoserine to L-homoserine phosphate. This is Homoserine kinase from Listeria monocytogenes serotype 4b (strain F2365).